A 107-amino-acid chain; its full sequence is UPF0122 protein STH1464 (107 aa).

This sequence belongs to the UPF0122 family.

Might take part in the signal recognition particle (SRP) pathway. This is inferred from the conservation of its genetic proximity to ftsY/ffh. May be a regulatory protein. The protein is UPF0122 protein STH1464 of Symbiobacterium thermophilum (strain DSM 24528 / JCM 14929 / IAM 14863 / T).